We begin with the raw amino-acid sequence, 338 residues long: Phenylalanine--tRNA ligase alpha subunit (338 aa).

Glu-252 lines the Mg(2+) pocket.

Belongs to the class-II aminoacyl-tRNA synthetase family. Phe-tRNA synthetase alpha subunit type 1 subfamily. In terms of assembly, tetramer of two alpha and two beta subunits. The cofactor is Mg(2+).

It localises to the cytoplasm. It carries out the reaction tRNA(Phe) + L-phenylalanine + ATP = L-phenylalanyl-tRNA(Phe) + AMP + diphosphate + H(+). The chain is Phenylalanine--tRNA ligase alpha subunit from Pseudomonas entomophila (strain L48).